Consider the following 247-residue polypeptide: Cell division protein ZapD (247 aa).

Belongs to the ZapD family. Interacts with FtsZ.

The protein localises to the cytoplasm. Cell division factor that enhances FtsZ-ring assembly. Directly interacts with FtsZ and promotes bundling of FtsZ protofilaments, with a reduction in FtsZ GTPase activity. This chain is Cell division protein ZapD, found in Klebsiella pneumoniae subsp. pneumoniae (strain ATCC 700721 / MGH 78578).